Reading from the N-terminus, the 242-residue chain is Beta-carotene ketolase (242 aa).

The catalysed reaction is all-trans-beta-carotene + 2 AH2 + 2 O2 = echinenone + 2 A + 3 H2O. It carries out the reaction echinenone + 2 AH2 + 2 O2 = canthaxanthin + 2 A + 3 H2O. It participates in carotenoid biosynthesis; astaxanthin biosynthesis. Converts beta-carotene to canthaxanthin via echinenone. This chain is Beta-carotene ketolase (crtW), found in Paracoccus sp. (strain N81106 / MBIC 01143) (Agrobacterium aurantiacum).